The sequence spans 492 residues: Phytoene desaturase (lycopene-forming) (492 aa).

An FAD-binding site is contributed by 5 to 38 (TVIGAGFGGLALAIRLQAAGIPVLLLEQRDKPGG).

This sequence belongs to the carotenoid/retinoid oxidoreductase family. The cofactor is FAD.

The protein localises to the cell membrane. It carries out the reaction 15-cis-phytoene + 4 A = all-trans-lycopene + 4 AH2. Its pathway is carotenoid biosynthesis; lycopene biosynthesis. Inhibited by NAD and NADP. Converts 15-cis-phytoene into all-trans-lycopene via the intermediary of all-trans-phytofluene, all-trans-zeta-carotene and all-trans-neurosporene, by the introduction of four double bonds. In Pantoea ananas (Erwinia uredovora), this protein is Phytoene desaturase (lycopene-forming) (crtI).